A 493-amino-acid polypeptide reads, in one-letter code: Aspartyl/glutamyl-tRNA(Asn/Gln) amidotransferase subunit B (493 aa).

The tract at residues H268–F291 is disordered. Positions R280–F291 are enriched in basic and acidic residues.

This sequence belongs to the GatB/GatE family. GatB subfamily. In terms of assembly, heterotrimer of A, B and C subunits.

The catalysed reaction is L-glutamyl-tRNA(Gln) + L-glutamine + ATP + H2O = L-glutaminyl-tRNA(Gln) + L-glutamate + ADP + phosphate + H(+). It carries out the reaction L-aspartyl-tRNA(Asn) + L-glutamine + ATP + H2O = L-asparaginyl-tRNA(Asn) + L-glutamate + ADP + phosphate + 2 H(+). Functionally, allows the formation of correctly charged Asn-tRNA(Asn) or Gln-tRNA(Gln) through the transamidation of misacylated Asp-tRNA(Asn) or Glu-tRNA(Gln) in organisms which lack either or both of asparaginyl-tRNA or glutaminyl-tRNA synthetases. The reaction takes place in the presence of glutamine and ATP through an activated phospho-Asp-tRNA(Asn) or phospho-Glu-tRNA(Gln). The protein is Aspartyl/glutamyl-tRNA(Asn/Gln) amidotransferase subunit B of Corynebacterium glutamicum (strain ATCC 13032 / DSM 20300 / JCM 1318 / BCRC 11384 / CCUG 27702 / LMG 3730 / NBRC 12168 / NCIMB 10025 / NRRL B-2784 / 534).